A 179-amino-acid polypeptide reads, in one-letter code: Large ribosomal subunit protein uL5 (179 aa).

It belongs to the universal ribosomal protein uL5 family. Part of the 50S ribosomal subunit; part of the 5S rRNA/L5/L18/L25 subcomplex. Contacts the 5S rRNA and the P site tRNA. Forms a bridge to the 30S subunit in the 70S ribosome.

In terms of biological role, this is one of the proteins that bind and probably mediate the attachment of the 5S RNA into the large ribosomal subunit, where it forms part of the central protuberance. In the 70S ribosome it contacts protein S13 of the 30S subunit (bridge B1b), connecting the 2 subunits; this bridge is implicated in subunit movement. Contacts the P site tRNA; the 5S rRNA and some of its associated proteins might help stabilize positioning of ribosome-bound tRNAs. This Geotalea daltonii (strain DSM 22248 / JCM 15807 / FRC-32) (Geobacter daltonii) protein is Large ribosomal subunit protein uL5.